The primary structure comprises 317 residues: Actin-related protein 2/3 complex subunit 2 (317 aa).

It belongs to the ARPC2 family. In terms of assembly, component of the Arp2/3 complex composed of arp2, act2, arc1/p41-ARC, arc2/p34-ARC, arc3/p21-ARC, arc4/p20-ARC and arc5/p16-ARC.

It is found in the cytoplasm. It localises to the cytoskeleton. The protein resides in the actin patch. Its function is as follows. Functions as actin-binding component of the Arp2/3 complex which is involved in regulation of actin polymerization and together with an activating nucleation-promoting factor (NPF) mediates the formation of branched actin networks. Seems to contact the mother actin filament. The protein is Actin-related protein 2/3 complex subunit 2 (arc2) of Schizosaccharomyces pombe (strain 972 / ATCC 24843) (Fission yeast).